The primary structure comprises 278 residues: HTH-type transcriptional activator RhaS (278 aa).

One can recognise an HTH araC/xylS-type domain in the interval 174 to 272 (NLLLAWLEDH…NWSPRDIRQG (99 aa)). 2 consecutive DNA-binding regions (H-T-H motif) follow at residues 191-212 (DAVADQFSLSLRTLHRQLKQQT) and 239-262 (VTDIAYRCGFSDSNHFSTLFRREF).

Binds DNA as a dimer.

Its subcellular location is the cytoplasm. In terms of biological role, activates expression of the rhaBAD and rhaT operons. This Shigella flexneri serotype 5b (strain 8401) protein is HTH-type transcriptional activator RhaS.